The primary structure comprises 917 residues: MASNIFSRLVPQDRGRSFYEDLRQTDPDADLESRAGIDIDEENLNRSYHDYDLDEAERLAGDESHISHSRGDVAGANTVHRRGQKANTARWLGAGVEDDVDNDVPESLLVETPRAPQHLLLSPSRAGPSHPRPTAVPGPSTRQNQAQWEATRHQQRLHNDDTMPHGPFSGRAGQGRPEPPPVGLMAGDPYEQAMWRWVNVSNLDNFIKDVYAYYRAAGFWCIIVQRILELVNAAFVAVFLTFLSQCVDYHKLPHSKKMEDIIIPKCTQNMSLVWNVGLWLFAIYFICRCFGLIIQLRQLKHLRDFYTHLLKIPEADMQSVSWQDVVGRIMALRDSHPRTAGNLTRVQRAWIGSQSKERLDAHDIANRIMRRENFMIAMLNKDVLDLTIPLPFFRNKQHMSECVVLAISFSILDFVFDNQGQVNPEFLKASRRRQLSQKLKSRFFFAGLMIFVMSPFIALYLILVYFLTYFHEFRNDPGALGARTYNSLAKWKFREFNELDHLFNDRMNMSHPFAKRYIDMFPKRKTEQVARTVSFITGSIVAVLGLATIFDSEAFLTFEITPDRSVLFYVSILATLWAVARGNISDDNEVYDPEFAMKSIIEFTHYEPDHWRGRLHSTEVKNEFSELYKPRPQIFLEEILSILLTPLVLLVSLPNSTDQIVDFFREFTIHVDGLGYVCLFSVFNFQQGHANQKQAAAADAPDNREEYYSTKHGKMAASFYGFLDHYVINPKTGLPGNQLPGSRQQFQHPPSFPGLQSPTLAADMRHSRMMRERGRSSGVQIQGSQGRTPQFRTPMPQPSPMASILLDPHHQPAPGAFGSRSMHRSRQMAVPHRGGYMSDRDIIEEAVTEDGQDDARFGKLGDEDIDESGGALDESTWQTSPTKTLSRENSGANPQETEVGVLGLIHQFQQAHMHLRR.

Residues 1 to 226 (MASNIFSRLV…AGFWCIIVQR (226 aa)) lie on the Cytoplasmic side of the membrane. Disordered stretches follow at residues 16 to 37 (RSFYEDLRQTDPDADLESRAGI) and 119 to 177 (LLLS…QGRP). The chain crosses the membrane as a helical span at residues 227–247 (ILELVNAAFVAVFLTFLSQCV). Topologically, residues 248–275 (DYHKLPHSKKMEDIIIPKCTQNMSLVWN) are lumenal. Asn-269 carries N-linked (GlcNAc...) asparagine glycosylation. Residues 276–296 (VGLWLFAIYFICRCFGLIIQL) form a helical membrane-spanning segment. The Cytoplasmic segment spans residues 297-442 (RQLKHLRDFY…RQLSQKLKSR (146 aa)). An intramembrane segment occupies 443–463 (FFFAGLMIFVMSPFIALYLIL). Residues 464–539 (VYFLTYFHEF…ARTVSFITGS (76 aa)) are Cytoplasmic-facing. Residues 540–560 (IVAVLGLATIFDSEAFLTFEI) traverse the membrane as a helical segment. Topologically, residues 561-564 (TPDR) are lumenal. Residues 565-585 (SVLFYVSILATLWAVARGNIS) form a helical membrane-spanning segment. Topologically, residues 586–633 (DDNEVYDPEFAMKSIIEFTHYEPDHWRGRLHSTEVKNEFSELYKPRPQ) are cytoplasmic. At Lys-621 the chain carries N6-acetyllysine. The stretch at 634–654 (IFLEEILSILLTPLVLLVSLP) is an intramembrane region. The Cytoplasmic portion of the chain corresponds to 655 to 917 (NSTDQIVDFF…FQQAHMHLRR (263 aa)). The tract at residues 854 to 895 (DARFGKLGDEDIDESGGALDESTWQTSPTKTLSRENSGANPQ) is disordered. Positions 875-895 (STWQTSPTKTLSRENSGANPQ) are enriched in polar residues.

It belongs to the ATG9 family. In terms of assembly, homotrimer; forms a homotrimer with a central pore that forms a path between the two membrane leaflets. Interacts with HAT1. In terms of processing, acetylated by HAT1 at Lys-621, which increases the ability to bind vesicles during nutrient starvation induction. Post-translationally, phosphorylated by ATG1. ATG1 phosphorylation is required for preautophagosome elongation.

It is found in the preautophagosomal structure membrane. It localises to the cytoplasmic vesicle membrane. The protein localises to the vacuole membrane. Its subcellular location is the golgi apparatus membrane. The protein resides in the endoplasmic reticulum membrane. The catalysed reaction is a 1,2-diacyl-sn-glycero-3-phosphocholine(in) = a 1,2-diacyl-sn-glycero-3-phosphocholine(out). The enzyme catalyses a 1,2-diacyl-sn-glycero-3-phospho-L-serine(in) = a 1,2-diacyl-sn-glycero-3-phospho-L-serine(out). It carries out the reaction a 1,2-diacyl-sn-glycero-3-phosphoethanolamine(in) = a 1,2-diacyl-sn-glycero-3-phosphoethanolamine(out). It catalyses the reaction a 1,2-diacyl-sn-glycero-3-phospho-(1D-myo-inositol-3-phosphate)(in) = a 1,2-diacyl-sn-glycero-3-phospho-(1D-myo-inositol-3-phosphate)(out). Functionally, phospholipid scramblase involved in autophagy and cytoplasm to vacuole transport (Cvt) vesicle formation. Cycles between the preautophagosomal structure/phagophore assembly site (PAS) and the cytoplasmic vesicle pool and supplies membrane for the growing autophagosome. Lipid scramblase activity plays a key role in preautophagosomal structure/phagophore assembly by distributing the phospholipids that arrive through ATG2 from the cytoplasmic to the luminal leaflet of the bilayer, thereby driving autophagosomal membrane expansion. Required for mitophagy. Also involved in endoplasmic reticulum-specific autophagic process and is essential for the survival of cells subjected to severe ER stress. Different machineries are required for anterograde trafficking to the PAS during either the Cvt pathway or bulk autophagy and for retrograde trafficking. Plays a role in appressorium formation and pathogenicity. In Pyricularia oryzae (strain 70-15 / ATCC MYA-4617 / FGSC 8958) (Rice blast fungus), this protein is Autophagy-related protein 9.